The following is a 235-amino-acid chain: Ribonuclease PH (235 aa).

Residues Arg-86 and 124–126 (GTR) contribute to the phosphate site.

This sequence belongs to the RNase PH family. In terms of assembly, homohexameric ring arranged as a trimer of dimers.

It catalyses the reaction tRNA(n+1) + phosphate = tRNA(n) + a ribonucleoside 5'-diphosphate. Phosphorolytic 3'-5' exoribonuclease that plays an important role in tRNA 3'-end maturation. Removes nucleotide residues following the 3'-CCA terminus of tRNAs; can also add nucleotides to the ends of RNA molecules by using nucleoside diphosphates as substrates, but this may not be physiologically important. Probably plays a role in initiation of 16S rRNA degradation (leading to ribosome degradation) during starvation. In Legionella pneumophila (strain Corby), this protein is Ribonuclease PH.